We begin with the raw amino-acid sequence, 67 residues long: Brevinin-1CDYc (67 aa).

An N-terminal signal peptide occupies residues methionine 1 to cysteine 22. A propeptide spanning residues glutamate 23 to glutamate 45 is cleaved from the precursor. Cysteine 61 and cysteine 67 are oxidised to a cystine.

The protein belongs to the frog skin active peptide (FSAP) family. Brevinin subfamily. As to expression, expressed by the skin glands.

The protein resides in the secreted. Antimicrobial peptide. The polypeptide is Brevinin-1CDYc (Rana huanrensis (Huanren frog)).